Reading from the N-terminus, the 269-residue chain is NAD kinase (269 aa).

Asp45 functions as the Proton acceptor in the catalytic mechanism. NAD(+)-binding positions include Asp45–Gly46, Asn122–Glu123, Arg149, Asp151, and Ala186.

The protein belongs to the NAD kinase family. A divalent metal cation serves as cofactor.

It is found in the cytoplasm. It carries out the reaction NAD(+) + ATP = ADP + NADP(+) + H(+). Functionally, involved in the regulation of the intracellular balance of NAD and NADP, and is a key enzyme in the biosynthesis of NADP. Catalyzes specifically the phosphorylation on 2'-hydroxyl of the adenosine moiety of NAD to yield NADP. In Staphylococcus haemolyticus (strain JCSC1435), this protein is NAD kinase.